Reading from the N-terminus, the 398-residue chain is Phosphoglycerate kinase (398 aa).

Substrate-binding positions include 21-23 (DFN), R36, 59-62 (HLGR), R119, and R157. ATP-binding positions include K208, G296, E327, and 354–357 (GGDS).

The protein belongs to the phosphoglycerate kinase family. In terms of assembly, monomer.

Its subcellular location is the cytoplasm. The catalysed reaction is (2R)-3-phosphoglycerate + ATP = (2R)-3-phospho-glyceroyl phosphate + ADP. It participates in carbohydrate degradation; glycolysis; pyruvate from D-glyceraldehyde 3-phosphate: step 2/5. The sequence is that of Phosphoglycerate kinase from Streptococcus agalactiae serotype III (strain NEM316).